We begin with the raw amino-acid sequence, 243 residues long: 1-(5-phosphoribosyl)-5-[(5-phosphoribosylamino)methylideneamino] imidazole-4-carboxamide isomerase (243 aa).

Aspartate 8 serves as the catalytic Proton acceptor. The Proton donor role is filled by aspartate 129.

This sequence belongs to the HisA/HisF family.

The protein resides in the cytoplasm. The enzyme catalyses 1-(5-phospho-beta-D-ribosyl)-5-[(5-phospho-beta-D-ribosylamino)methylideneamino]imidazole-4-carboxamide = 5-[(5-phospho-1-deoxy-D-ribulos-1-ylimino)methylamino]-1-(5-phospho-beta-D-ribosyl)imidazole-4-carboxamide. It participates in amino-acid biosynthesis; L-histidine biosynthesis; L-histidine from 5-phospho-alpha-D-ribose 1-diphosphate: step 4/9. The chain is 1-(5-phosphoribosyl)-5-[(5-phosphoribosylamino)methylideneamino] imidazole-4-carboxamide isomerase from Geobacter sp. (strain M21).